We begin with the raw amino-acid sequence, 126 residues long: Glycine cleavage system H protein (126 aa).

The region spanning 23-104 (TLTVGITDHA…PYESWLFKIK (82 aa)) is the Lipoyl-binding domain. N6-lipoyllysine is present on Lys64.

The protein belongs to the GcvH family. As to quaternary structure, the glycine cleavage system is composed of four proteins: P, T, L and H. The cofactor is (R)-lipoate.

Its function is as follows. The glycine cleavage system catalyzes the degradation of glycine. The H protein shuttles the methylamine group of glycine from the P protein to the T protein. The protein is Glycine cleavage system H protein of Paraburkholderia phytofirmans (strain DSM 17436 / LMG 22146 / PsJN) (Burkholderia phytofirmans).